Here is a 295-residue protein sequence, read N- to C-terminus: AP-1-like transcription factor YAP4 (295 aa).

Residues S85, S89, and S196 each carry the phosphoserine modification. The span at 181 to 202 shows a compositional bias: polar residues; that stretch reads ASYFPSNSTPATRKNSATTNLP. Residues 181-205 form a disordered region; sequence ASYFPSNSTPATRKNSATTNLPSEE. The bZIP domain maps to 237–295; the sequence is PLRNTKRAAQNRSAQKAFRQRREKYIKNLEEKSKLFDGLMKENSELKKMIESLKSKLKE. The segment at 239–260 is basic motif; sequence RNTKRAAQNRSAQKAFRQRREK. Residues 262-271 are leucine-zipper; the sequence is IKNLEEKSKL.

Belongs to the bZIP family. YAP subfamily. In terms of assembly, homodimer.

It is found in the cytoplasm. Its subcellular location is the nucleus. In terms of biological role, transcription activator involved in the regulation of genes expressed in response to environmental changes and metabolic requirements. According to genome-wide promoter binding and gene expression studies it regulates, among others, genes involved in ribosome biogenesis, and protein synthesis. It may also be involved in pleiotropic drug resistance. When overexpressed it confers increased resistance to cisplatin, the DNA-alkylating agents methylmethanosulfonate, and mitomycin C, the antimalarial drugs quinidine, mefloquine, and chloroquine, and increases cellular tolerance to sodium and lithium. Preferentially binds 5'-TTACTAA-3'. The chain is AP-1-like transcription factor YAP4 (CIN5) from Saccharomyces cerevisiae (strain ATCC 204508 / S288c) (Baker's yeast).